The chain runs to 142 residues: MNTFSAKPAEVVHEWFVIDATDKVLGRVASEVALRLRGKHKAIYTPHVDTGDFIVVVNAEKLRVTGTKSIDKKYYRHSGYPGGIFETNFRDMQAKHPGRALQKAVKGMLPKGPLGYAMIKKLKVYAGDTHPHAAQQPKTLDI.

It belongs to the universal ribosomal protein uL13 family. Part of the 50S ribosomal subunit.

Functionally, this protein is one of the early assembly proteins of the 50S ribosomal subunit, although it is not seen to bind rRNA by itself. It is important during the early stages of 50S assembly. This chain is Large ribosomal subunit protein uL13, found in Leptothrix cholodnii (strain ATCC 51168 / LMG 8142 / SP-6) (Leptothrix discophora (strain SP-6)).